We begin with the raw amino-acid sequence, 316 residues long: 4-hydroxy-3-methylbut-2-enyl diphosphate reductase (316 aa).

Residue C17 coordinates [4Fe-4S] cluster. Positions 46 and 79 each coordinate (2E)-4-hydroxy-3-methylbut-2-enyl diphosphate. Dimethylallyl diphosphate contacts are provided by H46 and H79. Isopentenyl diphosphate contacts are provided by H46 and H79. C101 lines the [4Fe-4S] cluster pocket. H129 serves as a coordination point for (2E)-4-hydroxy-3-methylbut-2-enyl diphosphate. Dimethylallyl diphosphate is bound at residue H129. H129 lines the isopentenyl diphosphate pocket. The Proton donor role is filled by E131. A (2E)-4-hydroxy-3-methylbut-2-enyl diphosphate-binding site is contributed by T170. C200 contacts [4Fe-4S] cluster. Positions 228, 229, 230, and 273 each coordinate (2E)-4-hydroxy-3-methylbut-2-enyl diphosphate. The dimethylallyl diphosphate site is built by S228, S229, N230, and S273. Residues S228, S229, N230, and S273 each contribute to the isopentenyl diphosphate site.

It belongs to the IspH family. [4Fe-4S] cluster serves as cofactor.

The enzyme catalyses isopentenyl diphosphate + 2 oxidized [2Fe-2S]-[ferredoxin] + H2O = (2E)-4-hydroxy-3-methylbut-2-enyl diphosphate + 2 reduced [2Fe-2S]-[ferredoxin] + 2 H(+). It catalyses the reaction dimethylallyl diphosphate + 2 oxidized [2Fe-2S]-[ferredoxin] + H2O = (2E)-4-hydroxy-3-methylbut-2-enyl diphosphate + 2 reduced [2Fe-2S]-[ferredoxin] + 2 H(+). Its pathway is isoprenoid biosynthesis; dimethylallyl diphosphate biosynthesis; dimethylallyl diphosphate from (2E)-4-hydroxy-3-methylbutenyl diphosphate: step 1/1. The protein operates within isoprenoid biosynthesis; isopentenyl diphosphate biosynthesis via DXP pathway; isopentenyl diphosphate from 1-deoxy-D-xylulose 5-phosphate: step 6/6. Catalyzes the conversion of 1-hydroxy-2-methyl-2-(E)-butenyl 4-diphosphate (HMBPP) into a mixture of isopentenyl diphosphate (IPP) and dimethylallyl diphosphate (DMAPP). Acts in the terminal step of the DOXP/MEP pathway for isoprenoid precursor biosynthesis. The sequence is that of 4-hydroxy-3-methylbut-2-enyl diphosphate reductase from Roseobacter denitrificans (strain ATCC 33942 / OCh 114) (Erythrobacter sp. (strain OCh 114)).